Here is a 307-residue protein sequence, read N- to C-terminus: Nucleotide-binding protein ACP_0619 (307 aa).

The span at 1-14 shows a compositional bias: basic and acidic residues; it reads MPAPEPTRRAKKDA. A disordered region spans residues 1 to 23; sequence MPAPEPTRRAKKDASASPSPAHP. 33–40 contacts ATP; the sequence is GLSGAGKG. Residue 83–86 participates in GTP binding; the sequence is DVRE.

This sequence belongs to the RapZ-like family.

Functionally, displays ATPase and GTPase activities. The protein is Nucleotide-binding protein ACP_0619 of Acidobacterium capsulatum (strain ATCC 51196 / DSM 11244 / BCRC 80197 / JCM 7670 / NBRC 15755 / NCIMB 13165 / 161).